The sequence spans 614 residues: MAAVVQQNDLVFEFASNVMEDEQQLGDPAIFPAVIVEHVPGADILNSYAGLACVEEPNDMITESSLDVAEEEIIDEDEDDITLTVEASCHNGDETIETIEAAEALLNMDSPGPMLDEKRMNNSIFSSSEDDMVVAPVTHVSVTLDGIPEVMETQHVQETYAHSPGPSSPEQPKRKKGRKTKPPRPDSPTTTPNISVKKKNKDGKGNTIYLWEFLLALLQDKATCPKYIKWTQREKGIFKLVDSKAVSRLWGKHKNKPDMNYETMGRALRYYYQRGILAKVEGQRLVYQFKDMPKDLIYIDDEDPSCSIESSDPSLSSTATSSRNPASRSRASSSPGIKGGATTVLKPGNSKAAKPKDPMEPVQPSEALRTVQSTQAPYPTQLFRTIHVVQPVQAVPEAEAASSMPEETLNPSVPSIRTIQTPAQVPVVVSPGNQHLHTVTLQTVPITTVIASADPSSAAGSQKFILQAIPSSQPMTVLKENVVLQSQKPGSPPSIVLSPAHVQQVLTSSVPTVCNGTVSAASAPSFSATTPMVTFSHHSSQLVAHPPGTVITSVIKAQEAKTHIQEEVKKEVEDNEKQGTEDAEQQLQPYVMVVSNGFPSQAAIKNELLEPSSF.

Phosphoserine occurs at positions 110, 163, 167, and 168. The tract at residues threonine 159–lysine 199 is disordered. Positions lysine 173–proline 182 are enriched in basic residues. Serine 187 bears the Phosphoserine mark. Threonine 190 carries the phosphothreonine modification. Residues isoleucine 208–lysine 290 constitute a DNA-binding region (ETS). The interval aspartate 303–valine 371 is disordered. The span at serine 310–proline 335 shows a compositional bias: low complexity. Phosphoserine is present on serine 430.

Belongs to the ETS family. As to quaternary structure, binds to the underphosphorylated form of RB. May interact with other transcription factors in order to regulate specific genes. Interacts with RUNX1.

The protein localises to the nucleus. Its function is as follows. Transcription factor that activates the LYN and BLK promoters. In Bos taurus (Bovine), this protein is ETS-related transcription factor Elf-1 (ELF1).